The sequence spans 447 residues: Probable glycine dehydrogenase (decarboxylating) subunit 1 (447 aa).

It belongs to the GcvP family. N-terminal subunit subfamily. As to quaternary structure, the glycine cleavage system is composed of four proteins: P, T, L and H. In this organism, the P 'protein' is a heterodimer of two subunits.

The catalysed reaction is N(6)-[(R)-lipoyl]-L-lysyl-[glycine-cleavage complex H protein] + glycine + H(+) = N(6)-[(R)-S(8)-aminomethyldihydrolipoyl]-L-lysyl-[glycine-cleavage complex H protein] + CO2. Functionally, the glycine cleavage system catalyzes the degradation of glycine. The P protein binds the alpha-amino group of glycine through its pyridoxal phosphate cofactor; CO(2) is released and the remaining methylamine moiety is then transferred to the lipoamide cofactor of the H protein. The sequence is that of Probable glycine dehydrogenase (decarboxylating) subunit 1 from Halalkalibacterium halodurans (strain ATCC BAA-125 / DSM 18197 / FERM 7344 / JCM 9153 / C-125) (Bacillus halodurans).